The primary structure comprises 106 residues: Ribulose bisphosphate carboxylase small subunit (106 aa).

It belongs to the RuBisCO small chain family. As to quaternary structure, heterohexadecamer of 8 large and 8 small subunits.

Its subcellular location is the plastid. It is found in the cyanelle. Functionally, ruBisCO catalyzes two reactions: the carboxylation of D-ribulose 1,5-bisphosphate, the primary event in carbon dioxide fixation, as well as the oxidative fragmentation of the pentose substrate. Both reactions occur simultaneously and in competition at the same active site. Although the small subunit is not catalytic it is essential for maximal activity. In Cyanophora paradoxa, this protein is Ribulose bisphosphate carboxylase small subunit.